We begin with the raw amino-acid sequence, 131 residues long: MAGIKALVGLSFSGAIGLTFLMLGCALEYYGVYWPMFVLIFYFICPIPHFIARRVSDDSDAASSACRELAYFFTTGIVVSAFGFPIILARVEAIKWGACGLVLAGNAVIFLTILGFFLVFGRGDDFSWEQW.

Helical transmembrane passes span 7–27 (LVGL…GCAL), 32–52 (VYWP…HFIA), 69–89 (LAYF…IILA), and 100–120 (GLVL…FLVF).

Belongs to the OB-RGRP/VPS55 family.

It is found in the golgi apparatus membrane. It localises to the endosome membrane. Involved in protein trafficking. May be involved in the down-regulation of membrane protein levels. This chain is Leptin receptor gene-related protein (LEPROT), found in Gallus gallus (Chicken).